The chain runs to 405 residues: Accessory Sec system protein translocase subunit SecY2 (405 aa).

10 helical membrane-spanning segments follow: residues Leu-14–Val-34, Leu-63–Phe-83, Met-104–Val-124, Ile-131–Leu-151, Ala-156–Pro-176, Gly-191–Tyr-211, Met-247–Phe-267, Pro-285–Val-305, Phe-343–Leu-363, and Leu-368–Ile-388.

Belongs to the SecY/SEC61-alpha family. SecY2 subfamily. In terms of assembly, component of the accessory SecA2/SecY2 protein translocase complex required to export cell wall proteins. May form heterotrimers with SecE and SecG subunits.

It localises to the cell membrane. In terms of biological role, part of the accessory SecA2/SecY2 system specifically required for export of possible cell wall proteins. The central subunit of a protein translocation channel. This is Accessory Sec system protein translocase subunit SecY2 from Streptococcus pneumoniae (strain CGSP14).